We begin with the raw amino-acid sequence, 155 residues long: 6,7-dimethyl-8-ribityllumazine synthase (155 aa).

5-amino-6-(D-ribitylamino)uracil is bound by residues F23, 57–59, and 81–83; these read AYE and AVI. 86–87 contacts (2S)-2-hydroxy-3-oxobutyl phosphate; sequence AT. H89 serves as the catalytic Proton donor. F114 is a 5-amino-6-(D-ribitylamino)uracil binding site. A (2S)-2-hydroxy-3-oxobutyl phosphate-binding site is contributed by R128.

This sequence belongs to the DMRL synthase family.

It carries out the reaction (2S)-2-hydroxy-3-oxobutyl phosphate + 5-amino-6-(D-ribitylamino)uracil = 6,7-dimethyl-8-(1-D-ribityl)lumazine + phosphate + 2 H2O + H(+). The protein operates within cofactor biosynthesis; riboflavin biosynthesis; riboflavin from 2-hydroxy-3-oxobutyl phosphate and 5-amino-6-(D-ribitylamino)uracil: step 1/2. Its function is as follows. Catalyzes the formation of 6,7-dimethyl-8-ribityllumazine by condensation of 5-amino-6-(D-ribitylamino)uracil with 3,4-dihydroxy-2-butanone 4-phosphate. This is the penultimate step in the biosynthesis of riboflavin. The sequence is that of 6,7-dimethyl-8-ribityllumazine synthase from Desulfotalea psychrophila (strain LSv54 / DSM 12343).